Consider the following 653-residue polypeptide: DUF21 domain-containing protein At1g55930, chloroplastic (653 aa).

Residues 1 to 72 (MELDLSVLGR…DFSHRCQFVV (72 aa)) constitute a chloroplast transit peptide. Helical transmembrane passes span 103-123 (GIVL…KVLA), 157-177 (GLIL…ETSI), 208-228 (FLTT…ALVT), 234-254 (IFGE…ILLL), and 280-300 (WLSL…MGIL). Residues 149-335 (VLKVLREQGL…ELSGAIEEEE (187 aa)) form the CNNM transmembrane domain. CBS domains follow at residues 354-415 (MTPL…LLES) and 421-479 (MAHK…IFDE).

The protein localises to the plastid. Its subcellular location is the chloroplast membrane. The protein is DUF21 domain-containing protein At1g55930, chloroplastic (CBSDUFCH2) of Arabidopsis thaliana (Mouse-ear cress).